We begin with the raw amino-acid sequence, 347 residues long: Metacaspase-2 (347 aa).

The interval 1 to 70 (MCSLITQLCD…QPWVATPLPG (70 aa)) is regulates substrate access to the active site. His-158 is a catalytic residue. Ca(2+)-binding residues include Asp-173, Asp-189, and Asp-190. The active site involves Cys-213. Asp-220 is a Ca(2+) binding site.

It belongs to the peptidase C14B family. Monomer. In terms of processing, auto-proteolytic cleavage of the propeptide after Lys-55 and between the large and small subunits after Lys-268 is required for catalytic activity towards large protein substrates but is dispensable towards small oligopeptide substrates. After processing, the propeptide and the large and small subunits remain associated by non-covalent bonds. In vivo, the unprocessed enzyme appears to be the predominant form.

Its subcellular location is the recycling endosome. Activated by Ca(2+). In response to calcium binding, the 280-loop, the 280-loop, a disordered loop consisting of residues 269-275, undergoes a conformational change which stabilizes substrates in the active site. The binding to the substrate triggers the release of the N-terminal region resulting in the activation of the enzyme. Proteolytic cleavage is required for catalytic activity towards large protein substrates. Its function is as follows. Cysteine protease that cleaves specifically after arginine or lysine residues. This is Metacaspase-2 from Trypanosoma brucei brucei.